The chain runs to 335 residues: MLRLSLLRSTATLPVKCQRRGLILPAAAMYTLGSLIFGKEARLADAMERGELHNKNVDYAKEAEERTELRIRALANTRPMEPRYNGHVPLHRYEKLLLFAISGWNSFFHPEDGYNIVQLGEATALPVFLENLKQTMLSDSSGRRILKEQPNITTEILHMDKLAKLPHNTLGYVYYQWLKRENVSPDTRAPVKFIDDPMHAYIFKRYRQCHDFYHAITNMPIIIEGEITIKALEGANLGVPMAILGGILAPLRLKKVQRKRLYNIYLPWAVRTGLSCKPLINVYWEEMLEKDVTALRKELKITLPPDLRTMRKERAALRKEIDAKYNSQKRATTPA.

The transit peptide at 1–10 (MLRLSLLRST) directs the protein to the mitochondrion. Residues H210, D211, H214, and E226 each contribute to the Zn(2+) site.

The protein belongs to the COQ4 family. As to quaternary structure, component of a multi-subunit COQ enzyme complex, composed of at least COQ3, COQ4, COQ5, COQ6, COQ7 and COQ9. Interacts with COQ3. The cofactor is Zn(2+).

The protein localises to the mitochondrion inner membrane. It catalyses the reaction 4-hydroxy-3-methoxy-5-(all-trans-hexaprenyl)benzoate + H(+) = 2-methoxy-6-(all-trans-hexaprenyl)phenol + CO2. It functions in the pathway cofactor biosynthesis; ubiquinone biosynthesis. Lyase that catalyzes the C1-decarboxylation of 4-hydroxy-3-methoxy-5-(all-trans-hexaprenyl)benzoic acid into 2-methoxy-6-(all-trans-hexaprenyl)phenol during ubiquinone biosynthesis. The polypeptide is Ubiquinone biosynthesis protein COQ4, mitochondrial (Saccharomyces cerevisiae (strain AWRI1631) (Baker's yeast)).